Reading from the N-terminus, the 140-residue chain is UPF0179 protein Msp_0996 (140 aa).

Belongs to the UPF0179 family.

This Methanosphaera stadtmanae (strain ATCC 43021 / DSM 3091 / JCM 11832 / MCB-3) protein is UPF0179 protein Msp_0996.